Consider the following 33-residue polypeptide: Neutrophil defensin 4 (33 aa).

3 disulfides stabilise this stretch: C3–C31, C5–C20, and C10–C30.

The protein belongs to the alpha-defensin family. Post-translationally, HANP-2 could be a product of proteolytic N-terminal amino acid removal from HANP-4.

It is found in the secreted. Bactericidal activity, greater against Gram-positive bacteria. Low anti-fungi activity. This is Neutrophil defensin 4 from Mesocricetus auratus (Golden hamster).